Here is a 95-residue protein sequence, read N- to C-terminus: MKLVPLGDKVVLKQLVAEETTKSGIVLPGQAKEKPQQAEVVAVGPGGMVDGKEVTMQVKVGDKVIYSKYAGTEVKLDEEEFIVVKQNDIVAIVAD.

This sequence belongs to the GroES chaperonin family. As to quaternary structure, heptamer of 7 subunits arranged in a ring. Interacts with the chaperonin GroEL.

It localises to the cytoplasm. Together with the chaperonin GroEL, plays an essential role in assisting protein folding. The GroEL-GroES system forms a nano-cage that allows encapsulation of the non-native substrate proteins and provides a physical environment optimized to promote and accelerate protein folding. GroES binds to the apical surface of the GroEL ring, thereby capping the opening of the GroEL channel. This Lachnoclostridium phytofermentans (strain ATCC 700394 / DSM 18823 / ISDg) (Clostridium phytofermentans) protein is Co-chaperonin GroES.